The primary structure comprises 406 residues: Arginine deiminase (406 aa).

The active-site Amidino-cysteine intermediate is the C396.

It belongs to the arginine deiminase family.

It localises to the cytoplasm. It carries out the reaction L-arginine + H2O = L-citrulline + NH4(+). The protein operates within amino-acid degradation; L-arginine degradation via ADI pathway; carbamoyl phosphate from L-arginine: step 1/2. The chain is Arginine deiminase from Vibrio vulnificus (strain CMCP6).